A 296-amino-acid chain; its full sequence is MDPKISYFQTFIVASKTKSFSKAAKRLGITQGTVSNHISALEKYFDAQLFLRTPEGVDLTPEGKIFYERAEKILDLLNEAKLLMRAIHENPEGIIRIYASTTPGEHILPSIIKEYKSSYKNVDFEITITDSERCFKALDEGLADIAAVGYLKNKNYEYTIIGKDRLVLIVPPNHPLAEKGTAKLEDILKEDYIDREEGSGTREAFIKALNDKGYSIMDLNVVMRLGSHSAVITAVSEGYGVSVVSEIPAKKAEDAGLIKIVPVVDLDVVRYLYLVKSRRPKNPSAVKSFWEFVTKV.

The HTH lysR-type domain occupies 1-60; it reads MDPKISYFQTFIVASKTKSFSKAAKRLGITQGTVSNHISALEKYFDAQLFLRTPEGVDLT. The H-T-H motif DNA-binding region spans 20–39; it reads FSKAAKRLGITQGTVSNHIS.

The protein belongs to the LysR transcriptional regulatory family.

This is an uncharacterized protein from Methanocaldococcus jannaschii (strain ATCC 43067 / DSM 2661 / JAL-1 / JCM 10045 / NBRC 100440) (Methanococcus jannaschii).